A 291-amino-acid chain; its full sequence is Pantothenate synthetase (291 aa).

30–37 serves as a coordination point for ATP; it reads MGYLHVGH. Histidine 37 (proton donor) is an active-site residue. A (R)-pantoate-binding site is contributed by glutamine 61. Glutamine 61 serves as a coordination point for beta-alanine. 147 to 150 lines the ATP pocket; it reads GEKD. A (R)-pantoate-binding site is contributed by glutamine 153. Residues valine 176 and 184 to 187 each bind ATP; that span reads CSSR.

This sequence belongs to the pantothenate synthetase family. In terms of assembly, homodimer.

It localises to the cytoplasm. The enzyme catalyses (R)-pantoate + beta-alanine + ATP = (R)-pantothenate + AMP + diphosphate + H(+). Its pathway is cofactor biosynthesis; (R)-pantothenate biosynthesis; (R)-pantothenate from (R)-pantoate and beta-alanine: step 1/1. In terms of biological role, catalyzes the condensation of pantoate with beta-alanine in an ATP-dependent reaction via a pantoyl-adenylate intermediate. This Rhizobium meliloti (strain 1021) (Ensifer meliloti) protein is Pantothenate synthetase.